Consider the following 333-residue polypeptide: 2-haloacrylate reductase (333 aa).

Position 153 to 159 (153 to 159) interacts with NADP(+); that stretch reads AAAGGMG.

The protein belongs to the zinc-containing alcohol dehydrogenase family.

The enzyme catalyses (S)-2-chloropropanoate + NADP(+) = 2-chloroacrylate + NADPH + H(+). Functionally, involved in the degradation of unsaturated organohalogen compounds. Catalyzes the NADPH-dependent reduction of the carbon-carbon double bond of 2-chloroacrylate to produce (S)-2-chloropropionate, which is probably further metabolized to (R)-lactate by (S)-2-haloacid dehalogenase. Can also use 2-bromoacrylate as substrate. Does not act on acrylate, methacrylate, 1,4-benzoquinone and 1,4-naphthoquinone. The sequence is that of 2-haloacrylate reductase from Burkholderia sp.